The following is a 197-amino-acid chain: Probable host range protein 2 (197 aa).

The disordered stretch occupies residues 172–197; sequence DHDDNDNADDDEEDDDEVNDIEDDYE. The segment covering 174–197 has biased composition (acidic residues); sequence DDNDNADDDEEDDDEVNDIEDDYE.

Belongs to the poxviridae C7 protein family.

In Ovis aries (Sheep), this protein is Probable host range protein 2.